The following is a 263-amino-acid chain: Ribosomal RNA small subunit methyltransferase A (263 aa).

6 residues coordinate S-adenosyl-L-methionine: asparagine 20, leucine 22, glycine 47, glutamate 68, aspartate 90, and asparagine 110.

Belongs to the class I-like SAM-binding methyltransferase superfamily. rRNA adenine N(6)-methyltransferase family. RsmA subfamily.

The protein resides in the cytoplasm. It carries out the reaction adenosine(1518)/adenosine(1519) in 16S rRNA + 4 S-adenosyl-L-methionine = N(6)-dimethyladenosine(1518)/N(6)-dimethyladenosine(1519) in 16S rRNA + 4 S-adenosyl-L-homocysteine + 4 H(+). In terms of biological role, specifically dimethylates two adjacent adenosines (A1518 and A1519) in the loop of a conserved hairpin near the 3'-end of 16S rRNA in the 30S particle. May play a critical role in biogenesis of 30S subunits. This Chlorobium limicola (strain DSM 245 / NBRC 103803 / 6330) protein is Ribosomal RNA small subunit methyltransferase A.